Here is a 156-residue protein sequence, read N- to C-terminus: Arginine repressor (156 aa).

This sequence belongs to the ArgR family.

The protein resides in the cytoplasm. Its pathway is amino-acid biosynthesis; L-arginine biosynthesis [regulation]. Its function is as follows. Regulates arginine biosynthesis genes. In Shewanella sp. (strain ANA-3), this protein is Arginine repressor.